The following is a 510-amino-acid chain: Maturase K (510 aa).

This sequence belongs to the intron maturase 2 family. MatK subfamily.

The protein localises to the plastid. Its subcellular location is the chloroplast. Usually encoded in the trnK tRNA gene intron. Probably assists in splicing its own and other chloroplast group II introns. The protein is Maturase K of Populus trichocarpa (Western balsam poplar).